The following is a 218-amino-acid chain: Small ribosomal subunit protein uS3c (218 aa).

A KH type-2 domain is found at 47 to 118 (VQKNIRISSG…KLNIAITRIT (72 aa)).

Belongs to the universal ribosomal protein uS3 family. As to quaternary structure, part of the 30S ribosomal subunit.

The protein localises to the plastid. It is found in the chloroplast. The chain is Small ribosomal subunit protein uS3c (rps3) from Vitis vinifera (Grape).